The primary structure comprises 425 residues: Inositol hexakisphosphate kinase 2 (425 aa).

Residues glutamate 206–leucine 208 and aspartate 219 each bind ATP. Substrate contacts are provided by residues proline 215–glycine 223, lysine 221, and lysine 235–lysine 242. Residue aspartate 382 coordinates ATP. Position 385 (histidine 385) interacts with substrate.

The protein belongs to the inositol phosphokinase (IPK) family. Detected in kidney, intestine, liver and heart.

The protein resides in the nucleus. The catalysed reaction is 1D-myo-inositol hexakisphosphate + ATP = 5-diphospho-1D-myo-inositol 1,2,3,4,6-pentakisphosphate + ADP. Its pathway is phospholipid metabolism; phosphatidylinositol metabolism. Functionally, converts inositol hexakisphosphate (InsP6) to diphosphoinositol pentakisphosphate (InsP7/PP-InsP5). This Oryctolagus cuniculus (Rabbit) protein is Inositol hexakisphosphate kinase 2 (IP6K2).